Reading from the N-terminus, the 388-residue chain is Probable mannan endo-1,4-beta-mannosidase A-1 (388 aa).

Residues 1 to 20 form the signal peptide; sequence MKLSPLMALAGLASAQLALA. Substrate-binding residues include Trp-93 and Asn-206. Catalysis depends on Glu-207, which acts as the Proton donor. The N-linked (GlcNAc...) asparagine glycan is linked to Asn-264. Tyr-282 serves as a coordination point for substrate. Catalysis depends on Glu-315, which acts as the Nucleophile. Asn-335 carries an N-linked (GlcNAc...) asparagine glycan. A substrate-binding site is contributed by Trp-345.

The protein belongs to the glycosyl hydrolase 5 (cellulase A) family.

It is found in the secreted. The enzyme catalyses Random hydrolysis of (1-&gt;4)-beta-D-mannosidic linkages in mannans, galactomannans and glucomannans.. In terms of biological role, endo-1,4-mannanase, a crucial enzyme for depolymerization of seed galactomannans and wood galactoglucomannans. This Aspergillus terreus (strain NIH 2624 / FGSC A1156) protein is Probable mannan endo-1,4-beta-mannosidase A-1 (manA-1).